Consider the following 272-residue polypeptide: Indole-3-glycerol phosphate synthase (272 aa).

The protein belongs to the TrpC family.

It catalyses the reaction 1-(2-carboxyphenylamino)-1-deoxy-D-ribulose 5-phosphate + H(+) = (1S,2R)-1-C-(indol-3-yl)glycerol 3-phosphate + CO2 + H2O. The protein operates within amino-acid biosynthesis; L-tryptophan biosynthesis; L-tryptophan from chorismate: step 4/5. In Mycobacterium ulcerans (strain Agy99), this protein is Indole-3-glycerol phosphate synthase.